Consider the following 699-residue polypeptide: Kinesin-II 85 kDa subunit (699 aa).

The Kinesin motor domain occupies N10 to I342. G97 to T104 contributes to the ATP binding site. Positions N341–C619 form a coiled coil. 3 disordered regions span residues K369 to E415, E432 to L456, and G660 to Q699. The span at E376–G395 shows a compositional bias: acidic residues. Over residues K400–K411 the composition is skewed to basic residues. Residues V620 to Q699 are globular. Residues Q667 to R679 show a composition bias toward polar residues.

The protein belongs to the TRAFAC class myosin-kinesin ATPase superfamily. Kinesin family. Kinesin II subfamily. In terms of assembly, heterotrimer of a 115 kDa subunit (KAP115) and two kinesin-like subunits of 95 kDa (KRP95) and 85 kDa (KRP85). The N-terminus is blocked.

The protein resides in the cytoplasm. The protein localises to the cytoskeleton. In Strongylocentrotus purpuratus (Purple sea urchin), this protein is Kinesin-II 85 kDa subunit (KRP85).